The primary structure comprises 511 residues: Centrosomal protein CCDC61 (511 aa).

The tract at residues 1 to 144 is head domain; it reads MEVGTVVQEE…PLPLPYLGKP (144 aa). Residues 147–272 are a coiled coil; the sequence is AELQKEIRAL…RVKSLTTELA (126 aa). Disordered regions lie at residues 306–403 and 447–486; these read TRVG…SREP and RGRKLMSNGPAVSRGRHINKKPMCSTPAQRMRAGDTSMDT. The segment covering 315–335 has biased composition (basic and acidic residues); it reads GSRERIEDRGRRSEERVRRAD. Positions 338–352 are enriched in polar residues; it reads GSRNCITRPSPSPTG. Residues 366–378 are compositionally biased toward basic and acidic residues; it reads DRQRRQKEAELKS.

The protein belongs to the CCDC61 family. As to quaternary structure, forms homodimers (via head domain).

The protein localises to the cytoplasm. The protein resides in the cytoskeleton. It is found in the microtubule organizing center. It localises to the centrosome. Its subcellular location is the centriolar satellite. The protein localises to the cilium basal body. Its function is as follows. Microtubule-binding centrosomal protein required for centriole cohesion, independently of the centrosome-associated protein/CEP250 and rootletin/CROCC linker. In interphase, required for anchoring microtubule at the mother centriole subdistal appendages and for centrosome positioning. During mitosis, may be involved in spindle assembly and chromatin alignment by regulating the organization of spindle microtubules into a symmetrical structure. Plays a non-essential role in ciliogenesis. The sequence is that of Centrosomal protein CCDC61 from Danio rerio (Zebrafish).